Here is a 552-residue protein sequence, read N- to C-terminus: uncharacterized protein (552 aa).

Residues 1-59 are disordered; it reads MPLEKTNTHDSTATVEDQEATDNPMHLTQSRMLDLAGNPNRTTSRQSETLFPNGVDLNY. Residues 39–50 show a composition bias toward polar residues; the sequence is PNRTTSRQSETL. 12 consecutive transmembrane segments (helical) span residues 116 to 136, 158 to 178, 181 to 201, 203 to 223, 238 to 258, 271 to 291, 345 to 365, 383 to 403, 424 to 444, 450 to 470, 484 to 506, and 519 to 539; these read ITIV…VIAG, LMVV…EMIG, IVYL…ALAP, IACL…PLTL, GLAI…GPLV, WIFW…LPVP, ILVC…GYFF, GLMF…TPFL, LVGM…FAWT, IWIG…LFYF, CASA…PLFI, and FFLL…FYLF.

The protein belongs to the major facilitator superfamily.

The protein resides in the membrane. This is an uncharacterized protein from Schizosaccharomyces pombe (strain 972 / ATCC 24843) (Fission yeast).